A 238-amino-acid polypeptide reads, in one-letter code: Triggering receptor expressed on myeloid cells 1 (238 aa).

The signal sequence occupies residues 1 to 20; that stretch reads MRSARLGRLLWMLFITEIQA. An Ig-like V-type domain is found at 21–129; that stretch reads ATELPEEKYI…KDPIILFYPV (109 aa). Residues 21–210 are Extracellular-facing; sequence ATELPEEKYI…DITRDTEISL (190 aa). Cysteines 41 and 113 form a disulfide. N-linked (GlcNAc...) asparagine glycosylation occurs at Asn-135. Residues 141–169 form a disordered region; it reads PASAETPTQSCSPTTTLPPTTTTNRHRPR. Residues 146-163 are compositionally biased toward low complexity; sequence TPTQSCSPTTTLPPTTTT. N-linked (GlcNAc...) asparagine glycosylation occurs at Asn-198. A helical membrane pass occupies residues 211–231; it reads ILPAVCGLLSKSLVFIVLFVV. Topologically, residues 232 to 238 are cytoplasmic; the sequence is TRMSFTP.

In terms of assembly, monomer. Homomultimer; when activated. Interacts with TYROBP/DAP12. Interacts with TLR4.

It localises to the cell membrane. Functionally, cell surface receptor that plays important roles in innate and adaptive immunity by amplifying inflammatory responses. Upon activation by various ligands such as PGLYRP1, HMGB1 or HSP70, multimerizes and forms a complex with transmembrane adapter TYROBP/DAP12. In turn, initiates a SYK-mediated cascade of tyrosine phosphorylation, activating multiple downstream mediators such as BTK, MAPK1, MAPK3 or phospholipase C-gamma. This cascade promotes the neutrophil- and macrophage-mediated release of pro-inflammatory cytokines and/or chemokines, as well as their migration and thereby amplifies inflammatory responses that are triggered by bacterial and fungal infections. By also promoting the amplification of inflammatory signals that are initially triggered by Toll-like receptor (TLR) and NOD-like receptor engagement, plays a major role in the pathophysiology of acute and chronic inflammatory diseases of different etiologies including septic shock and atherosclerosis. This is Triggering receptor expressed on myeloid cells 1 (TREM1) from Sus scrofa (Pig).